The sequence spans 217 residues: Putative 3-methyladenine DNA glycosylase (217 aa).

One can recognise an RPE2 insert domain in the interval 105–145 (SHNNVYTIDTAKIKSQITDEKTQSIIIRKNRRIMKFYIPNL).

The protein belongs to the DNA glycosylase MPG family.

The chain is Putative 3-methyladenine DNA glycosylase from Rickettsia prowazekii (strain Madrid E).